Here is a 233-residue protein sequence, read N- to C-terminus: Uridylate kinase (233 aa).

Position 9–10 (9–10 (GS)) interacts with ATP. Glycine 43 serves as a coordination point for UMP. Glycine 44 and arginine 48 together coordinate ATP. Residues aspartate 65 and 113–119 (VTPGQTT) contribute to the UMP site. ATP contacts are provided by threonine 139, tyrosine 145, and aspartate 148.

It belongs to the UMP kinase family. As to quaternary structure, homohexamer.

It localises to the cytoplasm. It carries out the reaction UMP + ATP = UDP + ADP. It participates in pyrimidine metabolism; CTP biosynthesis via de novo pathway; UDP from UMP (UMPK route): step 1/1. Its activity is regulated as follows. Inhibited by UTP. In terms of biological role, catalyzes the reversible phosphorylation of UMP to UDP. The polypeptide is Uridylate kinase (Methanosarcina barkeri (strain Fusaro / DSM 804)).